The primary structure comprises 183 residues: ATP synthase subunit delta, chloroplastic (183 aa).

Belongs to the ATPase delta chain family. In terms of assembly, F-type ATPases have 2 components, F(1) - the catalytic core - and F(0) - the membrane proton channel. F(1) has five subunits: alpha(3), beta(3), gamma(1), delta(1), epsilon(1). CF(0) has four main subunits: a(1), b(1), b'(1) and c(10-14). The alpha and beta chains form an alternating ring which encloses part of the gamma chain. F(1) is attached to F(0) by a central stalk formed by the gamma and epsilon chains, while a peripheral stalk is formed by the delta, b and b' chains.

It localises to the plastid. Its subcellular location is the chloroplast thylakoid membrane. F(1)F(0) ATP synthase produces ATP from ADP in the presence of a proton or sodium gradient. F-type ATPases consist of two structural domains, F(1) containing the extramembraneous catalytic core and F(0) containing the membrane proton channel, linked together by a central stalk and a peripheral stalk. During catalysis, ATP synthesis in the catalytic domain of F(1) is coupled via a rotary mechanism of the central stalk subunits to proton translocation. In terms of biological role, this protein is part of the stalk that links CF(0) to CF(1). It either transmits conformational changes from CF(0) to CF(1) or is implicated in proton conduction. The chain is ATP synthase subunit delta, chloroplastic from Cyanidium caldarium (Red alga).